Consider the following 461-residue polypeptide: Cysteine--tRNA ligase (461 aa).

Cys27 contributes to the Zn(2+) binding site. The 'HIGH' region signature appears at 29–39 (ITVYDYCHIGH). Zn(2+)-binding residues include Cys208, His233, and Glu237. A 'KMSKS' region motif is present at residues 265-269 (KMSKS). An ATP-binding site is contributed by Lys268.

It belongs to the class-I aminoacyl-tRNA synthetase family. Monomer. Zn(2+) is required as a cofactor.

The protein localises to the cytoplasm. It catalyses the reaction tRNA(Cys) + L-cysteine + ATP = L-cysteinyl-tRNA(Cys) + AMP + diphosphate. This is Cysteine--tRNA ligase from Chromohalobacter salexigens (strain ATCC BAA-138 / DSM 3043 / CIP 106854 / NCIMB 13768 / 1H11).